The chain runs to 153 residues: uncharacterized protein (153 aa).

The N-terminal stretch at 1–19 is a signal peptide; the sequence is MRKYIPLVLFIFSWPVLCA. Active-site residues include Arg46, Glu54, and Arg88.

This sequence belongs to the thermonuclease family.

This is an uncharacterized protein from Escherichia coli O157:H7.